Consider the following 197-residue polypeptide: RING-H2 finger protein ATL80 (197 aa).

Residues 30–50 (LVVILAALLCALICVLGLIAV) traverse the membrane as a helical segment. Residues 111-153 (CAICLAEFSAGDELRVLPQCGHGFHVACIDTWLGSHSSCPSCR) form an RING-type; atypical zinc finger. The segment at 168-197 (PGSSSSGLESEPEIEIRIKQGEDDPNSFLP) is disordered.

This sequence belongs to the RING-type zinc finger family. ATL subfamily.

It is found in the membrane. The catalysed reaction is S-ubiquitinyl-[E2 ubiquitin-conjugating enzyme]-L-cysteine + [acceptor protein]-L-lysine = [E2 ubiquitin-conjugating enzyme]-L-cysteine + N(6)-ubiquitinyl-[acceptor protein]-L-lysine.. It participates in protein modification; protein ubiquitination. Functionally, may be involved in the early steps of the plant defense signaling pathway. The sequence is that of RING-H2 finger protein ATL80 (ATL80) from Arabidopsis thaliana (Mouse-ear cress).